We begin with the raw amino-acid sequence, 136 residues long: Large ribosomal subunit protein uL16 (136 aa).

The protein belongs to the universal ribosomal protein uL16 family. In terms of assembly, part of the 50S ribosomal subunit.

Its function is as follows. Binds 23S rRNA and is also seen to make contacts with the A and possibly P site tRNAs. The protein is Large ribosomal subunit protein uL16 of Karelsulcia muelleri (strain GWSS) (Sulcia muelleri).